We begin with the raw amino-acid sequence, 321 residues long: Lipoyl synthase (321 aa).

Cys-68, Cys-73, Cys-79, Cys-94, Cys-98, Cys-101, and Ser-308 together coordinate [4Fe-4S] cluster. In terms of domain architecture, Radical SAM core spans 80 to 297 (FNHGTATFMI…KAEAMAMGFT (218 aa)).

This sequence belongs to the radical SAM superfamily. Lipoyl synthase family. Requires [4Fe-4S] cluster as cofactor.

Its subcellular location is the cytoplasm. It catalyses the reaction [[Fe-S] cluster scaffold protein carrying a second [4Fe-4S](2+) cluster] + N(6)-octanoyl-L-lysyl-[protein] + 2 oxidized [2Fe-2S]-[ferredoxin] + 2 S-adenosyl-L-methionine + 4 H(+) = [[Fe-S] cluster scaffold protein] + N(6)-[(R)-dihydrolipoyl]-L-lysyl-[protein] + 4 Fe(3+) + 2 hydrogen sulfide + 2 5'-deoxyadenosine + 2 L-methionine + 2 reduced [2Fe-2S]-[ferredoxin]. It participates in protein modification; protein lipoylation via endogenous pathway; protein N(6)-(lipoyl)lysine from octanoyl-[acyl-carrier-protein]: step 2/2. Functionally, catalyzes the radical-mediated insertion of two sulfur atoms into the C-6 and C-8 positions of the octanoyl moiety bound to the lipoyl domains of lipoate-dependent enzymes, thereby converting the octanoylated domains into lipoylated derivatives. This is Lipoyl synthase from Yersinia pseudotuberculosis serotype O:1b (strain IP 31758).